The following is a 317-amino-acid chain: MSQEFLDFELPIAELEAKIEALRSVSQQDQQINLDDEITRLQKKSAELTQKTFANLDAWQVSQMARHPNRPYTLDYIEHIFTDFQTLAGDRAFADDQAIVGGLARLEERPVMIIGHQKGRSIKEKVKRNFGMPAPEGYRKALRLMQMAERFNLPIITFIDTPGAYPGVGAEERGQSEAIARNLREMSMLKVPIICTVIGEGGSGGALAIGVGDKINMLQYSTYSVISPEGCASILWKSAAKASTAAEVMGLTASRLHELKLIDSIIEEPLGGAHRNYDTMSNNLKKRLLADLADLDKLDQETLLDRRYKRLMSYGYC.

The 262-residue stretch at 33 to 294 folds into the CoA carboxyltransferase C-terminal domain; the sequence is NLDDEITRLQ…KKRLLADLAD (262 aa).

Belongs to the AccA family. As to quaternary structure, acetyl-CoA carboxylase is a heterohexamer composed of biotin carboxyl carrier protein (AccB), biotin carboxylase (AccC) and two subunits each of ACCase subunit alpha (AccA) and ACCase subunit beta (AccD).

The protein localises to the cytoplasm. The catalysed reaction is N(6)-carboxybiotinyl-L-lysyl-[protein] + acetyl-CoA = N(6)-biotinyl-L-lysyl-[protein] + malonyl-CoA. It functions in the pathway lipid metabolism; malonyl-CoA biosynthesis; malonyl-CoA from acetyl-CoA: step 1/1. Its function is as follows. Component of the acetyl coenzyme A carboxylase (ACC) complex. First, biotin carboxylase catalyzes the carboxylation of biotin on its carrier protein (BCCP) and then the CO(2) group is transferred by the carboxyltransferase to acetyl-CoA to form malonyl-CoA. The polypeptide is Acetyl-coenzyme A carboxylase carboxyl transferase subunit alpha (Histophilus somni (strain 2336) (Haemophilus somnus)).